The primary structure comprises 487 residues: GTPase Der (487 aa).

2 EngA-type G domains span residues 2–164 (KTIA…SLAK) and 203–374 (IAVG…QRFA). GTP is bound by residues 8–15 (GKPNVGKS), 55–59 (DTGGI), 116–119 (NKVD), 209–216 (GRVNVGKS), 256–260 (DTAGI), and 320–323 (NKWD). The 85-residue stretch at 375–459 (YRIPTSALND…PILLSVKGKN (85 aa)) folds into the KH-like domain. The span at 459–480 (NAKDEENTSAKKESPSKVSHRE) shows a compositional bias: basic and acidic residues. Residues 459-487 (NAKDEENTSAKKESPSKVSHRESKNRRFV) are disordered.

Belongs to the TRAFAC class TrmE-Era-EngA-EngB-Septin-like GTPase superfamily. EngA (Der) GTPase family. In terms of assembly, associates with the 50S ribosomal subunit.

Its function is as follows. GTPase that plays an essential role in the late steps of ribosome biogenesis. This is GTPase Der from Helicobacter hepaticus (strain ATCC 51449 / 3B1).